The primary structure comprises 400 residues: 1-deoxy-D-xylulose 5-phosphate reductoisomerase (400 aa).

NADPH-binding residues include T17, G18, S19, I20, and N131. K132 is a 1-deoxy-D-xylulose 5-phosphate binding site. E133 provides a ligand contact to NADPH. D157 contacts Mn(2+). 1-deoxy-D-xylulose 5-phosphate is bound by residues S158, E159, S188, and H211. Mn(2+) is bound at residue E159. G217 provides a ligand contact to NADPH. 1-deoxy-D-xylulose 5-phosphate contacts are provided by S224, N229, K230, and E233. A Mn(2+)-binding site is contributed by E233.

Belongs to the DXR family. Requires Mg(2+) as cofactor. The cofactor is Mn(2+).

It catalyses the reaction 2-C-methyl-D-erythritol 4-phosphate + NADP(+) = 1-deoxy-D-xylulose 5-phosphate + NADPH + H(+). The protein operates within isoprenoid biosynthesis; isopentenyl diphosphate biosynthesis via DXP pathway; isopentenyl diphosphate from 1-deoxy-D-xylulose 5-phosphate: step 1/6. Catalyzes the NADPH-dependent rearrangement and reduction of 1-deoxy-D-xylulose-5-phosphate (DXP) to 2-C-methyl-D-erythritol 4-phosphate (MEP). The protein is 1-deoxy-D-xylulose 5-phosphate reductoisomerase of Pseudomonas putida (strain ATCC 700007 / DSM 6899 / JCM 31910 / BCRC 17059 / LMG 24140 / F1).